Consider the following 1400-residue polypeptide: MELLPPLPQSFLLLLLLPAKPAAGEDWQCPRTPYAASRDFDVKYVVPSFSAGGLVQAMVTYEGDRNESAVFVAIRNRLHVLGPDLKSVQSLATGPAGDPGCQTCAACGPGPHGPPGDTDTKVLVLDPALPALVSCGSSLQGRCFLHDLEPQGTAVHLAAPACLFSAHHNRPDDCPDCVASPLGTRVTVVEQGQASYFYVASSLDAAVAASFSPRSVSIRRLKADASGFAPGFVALSVLPKHLVSYSIEYVHSFHTGAFVYFLTVQPASVTDDPSALHTRLARLSATEPELGDYRELVLDCRFAPKRRRRGAPEGGQPYPVLRVAHSAPVGAQLATELSIAEGQEVLFGVFVTGKDGGPGVGPNSVVCAFPIDLLDTLIDEGVERCCESPVHPGLRRGLDFFQSPSFCPNPPGLEALSPNTSCRHFPLLVSSSFSRVDLFNGLLGPVQVTALYVTRLDNVTVAHMGTMDGRILQVELVRSLNYLLYVSNFSLGDSGQPVQRDVSRLGDHLLFASGDQVFQVPIQGPGCRHFLTCGRCLRAWHFMGCGWCGNMCGQQKECPGSWQQDHCPPKLTEFHPHSGPLRGSTRLTLCGSNFYLHPSGLVPEGTHQVTVGQSPCRPLPKDSSKLRPVPRKDFVEEFECELEPLGTQAVGPTNVSLTVTNMPPGKHFRVDGTSVLRGFSFMEPVLIAVQPLFGPRAGGTCLTLEGQSLSVGTSRAVLVNGTECLLARVSEGQLLCATPPGATVASVPLSLQVGGAQVPGSWTFQYREDPVVLSISPNCGYINSHITICGQHLTSAWHLVLSFHDGLRAVESRCERQLPEQQLCRLPEYVVRDPQGWVAGNLSARGDGAAGFTLPGFRFLPPPHPPSANLVPLKPEEHAIKFEYIGLGAVADCVGINVTVGGESCQHEFRGDMVVCPLPPSLQLGQDGAPLQVCVDGECHILGRVVRPGPDGVPQSTLLGILLPLLLLVAALATALVFSYWWRRKQLVLPPNLNDLASLDQTAGATPLPILYSGSDYRSGLALPAIDGLDSTTCVHGASFSDSEDESCVPLLRKESIQLRDLDSALLAEVKDVLIPHERVVTHSDRVIGKGHFGVVYHGEYIDQAQNRIQCAIKSLSRITEMQQVEAFLREGLLMRGLNHPNVLALIGIMLPPEGLPHVLLPYMCHGDLLQFIRSPQRNPTVKDLISFGLQVARGMEYLAEQKFVHRDLAARNCMLDESFTVKVADFGLARDILDREYYSVQQHRHARLPVKWMALESLQTYRFTTKSDVWSFGVLLWELLTRGAPPYRHIDPFDLTHFLAQGRRLPQPEYCPDSLYQVMQQCWEADPAVRPTFRVLVGEVEQIVSALLGDHYVQLPATYMNLGPSTSHEMNVRPEQPQFSPMPGNVRRPRPLSEPPRPT.

Residues Met1 to Gly24 form the signal peptide. The Extracellular segment spans residues Glu25–Thr957. One can recognise a Sema domain in the interval Arg31–Ile522. Asn66 carries N-linked (GlcNAc...) asparagine glycosylation. 7 cysteine pairs are disulfide-bonded: Cys101–Cys104, Cys107–Cys162, Cys135–Cys143, Cys174–Cys177, Cys300–Cys367, Cys385–Cys407, and Cys386–Cys422. N-linked (GlcNAc...) asparagine glycans are attached at residues Asn419, Asn458, and Asn488. 4 disulfide bridges follow: Cys527–Cys545, Cys533–Cys567, Cys536–Cys552, and Cys548–Cys558. 3 IPT/TIG domains span residues Pro569–Asp671, Pro684–Arg767, and Pro770–Leu860. Asn654, Asn720, Asn841, and Asn897 each carry an N-linked (GlcNAc...) asparagine glycan. Residues Leu958–Phe978 traverse the membrane as a helical segment. Residues Ser979–Thr1400 are Cytoplasmic-facing. Positions Thr1082–Val1345 constitute a Protein kinase domain. Residues Ile1088–Val1096, Lys1114, and Leu1161–Met1164 each bind ATP. The active-site Proton acceptor is the Asp1208. ATP is bound at residue Arg1212. A phosphotyrosine; by autocatalysis mark is found at Tyr1238, Tyr1239, Tyr1353, and Tyr1360. Positions Thr1367–Thr1400 are disordered.

The protein belongs to the protein kinase superfamily. Tyr protein kinase family. In terms of assembly, heterodimer of an alpha chain and a beta chain which are disulfide linked. Binds PLXNB1. Associates with and is negatively regulated by HYAL2. Interacts when phosphorylated with downstream effectors including PIK3R1, PCLG1, GRB2 and GAB1. Interacts with integrin beta1/ITGB1 in a ligand-independent fashion. In terms of processing, proteolytic processing yields the two subunits. Autophosphorylated in response to ligand binding on Tyr-1238 and Tyr-1239 in the kinase domain leading to further phosphorylation of Tyr-1353 and Tyr-1360 in the C-terminal multifunctional docking site. Post-translationally, ubiquitinated. Ubiquitination by CBL regulates the receptor stability and activity through proteasomal degradation. In terms of processing, O-mannosylation of IPT/TIG domains on Thr or Ser residues by TMEM260 is required for protein maturation. O-mannosylated residues are composed of single mannose glycans that are not elongated or modified. As to expression, expressed in colon, skin, lung and bone marrow.

Its subcellular location is the membrane. It carries out the reaction L-tyrosyl-[protein] + ATP = O-phospho-L-tyrosyl-[protein] + ADP + H(+). With respect to regulation, in its inactive state, the C-terminal tail interacts with the catalytic domain and inhibits the kinase activity. Upon ligand binding, the C-terminal tail is displaced and becomes phosphorylated, thus increasing the kinase activity. Functionally, receptor tyrosine kinase that transduces signals from the extracellular matrix into the cytoplasm by binding to MST1 ligand. Regulates many physiological processes including cell survival, migration and differentiation. Ligand binding at the cell surface induces autophosphorylation of RON on its intracellular domain that provides docking sites for downstream signaling molecules. Following activation by ligand, interacts with the PI3-kinase subunit PIK3R1, PLCG1 or the adapter GAB1. Recruitment of these downstream effectors by RON leads to the activation of several signaling cascades including the RAS-ERK, PI3 kinase-AKT, or PLCgamma-PKC. RON signaling activates the wound healing response by promoting epithelial cell migration, proliferation as well as survival at the wound site. Also plays a role in the innate immune response by regulating the migration and phagocytic activity of macrophages. Alternatively, RON can also promote signals such as cell migration and proliferation in response to growth factors other than MST1 ligand. This chain is Macrophage-stimulating protein receptor (MST1R), found in Homo sapiens (Human).